Here is a 248-residue protein sequence, read N- to C-terminus: Mannose-binding protein C (248 aa).

The signal sequence occupies residues 1–20 (MSLFPSLPLLLLSMVAASYS). Positions 42–99 (GINGFPGKDGRDGTKGEKGEPGQGLRGLQGPPGKLGPPGNPGPSGSPGPKGQKGDPGK) constitute a Collagen-like domain. Positions 43-113 (INGFPGKDGR…DSSLAASERK (71 aa)) are disordered. P47 is modified (4-hydroxyproline). Over residues 49–61 (KDGRDGTKGEKGE) the composition is skewed to basic and acidic residues. 4-hydroxyproline is present on residues P73, P79, P82, and P88. A compositionally biased stretch (pro residues) spans 75–87 (KLGPPGNPGPSGS). Over residues 93–102 (QKGDPGKSPD) the composition is skewed to basic and acidic residues. A coiled-coil region spans residues 112–130 (RKALQTEMARIKKWLTFSL). A C-type lectin domain is found at 134-245 (VGNKFFLTNG…CSTSHLAVCE (112 aa)). Cystine bridges form between C155-C244 and C222-C236.

Oligomeric complex of 3 or more homotrimers. Interacts with MASP1 and MASP2. Interacts with MEP1A and MEP1B and may inhibit their catalytic activity. Post-translationally, hydroxylation on proline residues within the sequence motif, GXPG, is most likely to be 4-hydroxy as this fits the requirement for 4-hydroxylation in vertebrates.

It is found in the secreted. Functionally, calcium-dependent lectin involved in innate immune defense. Binds mannose, fucose and N-acetylglucosamine on different microorganisms and activates the lectin complement pathway. Binds to late apoptotic cells, as well as to apoptotic blebs and to necrotic cells, but not to early apoptotic cells, facilitating their uptake by macrophages. This chain is Mannose-binding protein C (MBL2), found in Gorilla gorilla gorilla (Western lowland gorilla).